The chain runs to 332 residues: Cytochrome c oxidase subunit 2 (332 aa).

A signal peptide spans 1 to 20 (MKIPGSVITLLIGVVITVVS). A run of 2 helical transmembrane segments spans residues 48-68 (MMTI…YCLI) and 87-107 (VPLE…LAVY). Residues His214, Cys249, Cys253, and His257 each contribute to the Cu cation site.

Belongs to the cytochrome c oxidase subunit 2 family. Cu cation is required as a cofactor.

The protein localises to the cell membrane. The enzyme catalyses 4 Fe(II)-[cytochrome c] + O2 + 8 H(+)(in) = 4 Fe(III)-[cytochrome c] + 2 H2O + 4 H(+)(out). Functionally, subunits I and II form the functional core of the enzyme complex. Electrons originating in cytochrome c are transferred via heme a and Cu(A) to the binuclear center formed by heme a3 and Cu(B). This Synechocystis sp. (strain ATCC 27184 / PCC 6803 / Kazusa) protein is Cytochrome c oxidase subunit 2 (ctaC).